The following is a 145-amino-acid chain: Putative pre-16S rRNA nuclease (145 aa).

It belongs to the YqgF nuclease family.

The protein resides in the cytoplasm. Could be a nuclease involved in processing of the 5'-end of pre-16S rRNA. In Pseudomonas fluorescens (strain Pf0-1), this protein is Putative pre-16S rRNA nuclease.